The sequence spans 1004 residues: Ephrin type-A receptor 8 (1004 aa).

Positions 1–26 are cleaved as a signal peptide; sequence MAPARARLSPALWVVTAAAAATCVSA. Residues 27 to 541 are Extracellular-facing; sequence GRGEVNLLDT…KPRPRYDTRT (515 aa). Residues 30 to 208 form the Eph LBD domain; the sequence is EVNLLDTSTI…YYKKCPAMVR (179 aa). 2 consecutive Fibronectin type-III domains span residues 327-437 and 438-533; these read PPSA…TNQA and APSQ…TGKP. N-linked (GlcNAc...) asparagine glycans are attached at residues Asn-339, Asn-406, and Asn-431. Residues 542-562 form a helical membrane-spanning segment; the sequence is IVWICLTLITGLVVLLLLLIC. The tract at residues 563–569 is mediates interaction with ANKS1A and ANKS1B; that stretch reads KKRHCGY. Residues 563 to 1004 lie on the Cytoplasmic side of the membrane; it reads KKRHCGYSKA…SSTQGPRRHL (442 aa). The segment at 588–643 is mediates interaction with PIK3CG and required for endocytosis; it reads APPPVFLPLNHPPGKFPETQFSAEPHTYEEPGRAGRSFTREIEASRIHIEKIIGSG. The residue at position 615 (Tyr-615) is a Phosphotyrosine; by autocatalysis. Residues 634 to 895 enclose the Protein kinase domain; that stretch reads IHIEKIIGSG…HVVSVLDALV (262 aa). ATP-binding positions include 640–648 and Lys-666; that span reads IGSGESGEV. Asp-759 functions as the Proton acceptor in the catalytic mechanism. Tyr-838 bears the Phosphotyrosine; by autocatalysis mark. The SAM domain occupies 929-993; it reads NGDLTVGDWL…LGSIQTMRAQ (65 aa). The short motif at 1002–1004 is the PDZ-binding element; the sequence is RHL.

It belongs to the protein kinase superfamily. Tyr protein kinase family. Ephrin receptor subfamily. As to quaternary structure, heterotetramer upon binding of the ligand. The heterotetramer is composed of an ephrin dimer and a receptor dimer. Oligomerization is probably required to induce biological responses. May also form heterodimers with other ephrin receptors. Interacts with FYN; possible downstream effector of EPHA8 in regulation of cell adhesion. Interacts with PIK3CG; regulates integrin-mediated cell adhesion to substrate. Interacts with TIAM1; regulates clathrin-mediated endocytosis of EPHA8. Interacts with ANKS1A and ANKS1B; EPHA8 kinase activity-independent but stimulated by EPHA8 ubiquitination. In terms of processing, phosphorylated. Phosphorylation is stimulated upon binding of its ligands including EFNA2, EFNA3 and EFNA5. Autophosphorylation on Tyr-615 is critical for association with FYN. Autophosphorylation on Tyr-838 modulates tyrosine kinase activity. Ubiquitinated. Ubiquitination by CBL regulates the receptor stability and activity through proteasomal degradation. ANKS1A prevents ubiquitination and degradation. Specifically expressed in the central nervous system.

The protein localises to the cell membrane. It localises to the cell projection. The protein resides in the early endosome membrane. The catalysed reaction is L-tyrosyl-[protein] + ATP = O-phospho-L-tyrosyl-[protein] + ADP + H(+). Its function is as follows. Receptor tyrosine kinase which binds promiscuously GPI-anchored ephrin-A family ligands residing on adjacent cells, leading to contact-dependent bidirectional signaling into neighboring cells. The signaling pathway downstream of the receptor is referred to as forward signaling while the signaling pathway downstream of the ephrin ligand is referred to as reverse signaling. The GPI-anchored ephrin-A EFNA2, EFNA3, and EFNA5 are able to activate EPHA8 through phosphorylation. With EFNA5 may regulate integrin-mediated cell adhesion and migration on fibronectin substrate but also neurite outgrowth. During development of the nervous system also plays a role in axon guidance. Downstream effectors of the EPHA8 signaling pathway include FYN which promotes cell adhesion upon activation by EPHA8 and the MAP kinases in the stimulation of neurite outgrowth. This is Ephrin type-A receptor 8 (Epha8) from Mus musculus (Mouse).